The sequence spans 115 residues: Dolichyl-diphosphooligosaccharide--protein glycosyltransferase subunit DAD1 (115 aa).

Topologically, residues 1 to 31 (MGTSTAKEAHALIASLRSAYSATPTKLKIID) are cytoplasmic. A helical membrane pass occupies residues 32 to 52 (LYVVYAILTAVVQVVYMAIVG). Topologically, residues 53–55 (SFP) are lumenal. Residues 56-76 (FNAFLSGVLSCTGTAVLAVCL) form a helical membrane-spanning segment. The Cytoplasmic segment spans residues 77–94 (RMQVNKENREFKDLPPER). A helical transmembrane segment spans residues 95–115 (AFADFVLCNLVLHLVIMNFLG).

This sequence belongs to the DAD/OST2 family. Component of the oligosaccharyltransferase (OST) complex.

The protein localises to the endoplasmic reticulum membrane. It participates in protein modification; protein glycosylation. In terms of biological role, subunit of the oligosaccharyl transferase (OST) complex that catalyzes the initial transfer of a defined glycan (Glc(3)Man(9)GlcNAc(2) in eukaryotes) from the lipid carrier dolichol-pyrophosphate to an asparagine residue within an Asn-X-Ser/Thr consensus motif in nascent polypeptide chains, the first step in protein N-glycosylation. N-glycosylation occurs cotranslationally and the complex associates with the Sec61 complex at the channel-forming translocon complex that mediates protein translocation across the endoplasmic reticulum (ER). All subunits are required for a maximal enzyme activity. The chain is Dolichyl-diphosphooligosaccharide--protein glycosyltransferase subunit DAD1 (DAD1) from Picea mariana (Black spruce).